Reading from the N-terminus, the 132-residue chain is Small ribosomal subunit protein uS8 (132 aa).

Belongs to the universal ribosomal protein uS8 family. In terms of assembly, part of the 30S ribosomal subunit. Contacts proteins S5 and S12.

Its function is as follows. One of the primary rRNA binding proteins, it binds directly to 16S rRNA central domain where it helps coordinate assembly of the platform of the 30S subunit. This is Small ribosomal subunit protein uS8 from Gluconobacter oxydans (strain 621H) (Gluconobacter suboxydans).